The primary structure comprises 355 residues: 3-isopropylmalate dehydrogenase (355 aa).

Residues Arg90, Arg100, Arg128, and Asp222 each contribute to the substrate site. Asp222, Asp246, and Asp250 together coordinate Mg(2+). Position 280–292 (280–292) interacts with NAD(+); sequence GSAPDIAGKGIAN.

Belongs to the isocitrate and isopropylmalate dehydrogenases family. LeuB type 1 subfamily. Homodimer. Mg(2+) serves as cofactor. It depends on Mn(2+) as a cofactor.

It is found in the cytoplasm. The enzyme catalyses (2R,3S)-3-isopropylmalate + NAD(+) = 4-methyl-2-oxopentanoate + CO2 + NADH. The protein operates within amino-acid biosynthesis; L-leucine biosynthesis; L-leucine from 3-methyl-2-oxobutanoate: step 3/4. Its function is as follows. Catalyzes the oxidation of 3-carboxy-2-hydroxy-4-methylpentanoate (3-isopropylmalate) to 3-carboxy-4-methyl-2-oxopentanoate. The product decarboxylates to 4-methyl-2 oxopentanoate. The polypeptide is 3-isopropylmalate dehydrogenase (Burkholderia lata (strain ATCC 17760 / DSM 23089 / LMG 22485 / NCIMB 9086 / R18194 / 383)).